The sequence spans 137 residues: 2-iminobutanoate/2-iminopropanoate deaminase (137 aa).

Residue serine 2 is modified to N-acetylserine. N6-succinyllysine occurs at positions 13, 60, and 67. A Phosphothreonine modification is found at threonine 74. Serine 136 is subject to Phosphoserine.

Belongs to the RutC family. In terms of assembly, homotrimer. Interacts with YTHDF2. As to expression, expressed predominantly in liver and kidney. Lower levels in lung and brain.

It localises to the cytoplasm. The protein resides in the nucleus. Its subcellular location is the peroxisome. It is found in the mitochondrion. It catalyses the reaction 2-iminobutanoate + H2O = 2-oxobutanoate + NH4(+). The enzyme catalyses 2-iminopropanoate + H2O = pyruvate + NH4(+). Catalyzes the hydrolytic deamination of enamine/imine intermediates that form during the course of normal metabolism. May facilitate the release of ammonia from these potentially toxic reactive metabolites, reducing their impact on cellular components. It may act on enamine/imine intermediates formed by several types of pyridoxal-5'-phosphate-dependent dehydratases including L-threonine dehydratase. Its function is as follows. Also promotes endoribonucleolytic cleavage of some transcripts by promoting recruitment of the ribonuclease P/MRP complex. Acts by bridging YTHDF2 and the ribonuclease P/MRP complex. RIDA/HRSP12 binds to N6-methyladenosine (m6A)-containing mRNAs containing a 5'-GGUUC-3' motif: cooperative binding of RIDA/HRSP12 and YTHDF2 to such transcripts lead to recruitment of the ribonuclease P/MRP complex and subsequent endoribonucleolytic cleavage. This chain is 2-iminobutanoate/2-iminopropanoate deaminase, found in Homo sapiens (Human).